Reading from the N-terminus, the 251-residue chain is Spermatogenesis-associated protein 46 (251 aa).

It is found in the nucleus membrane. In terms of biological role, plays a role in spermiogenesis and fertilization. This Macaca fascicularis (Crab-eating macaque) protein is Spermatogenesis-associated protein 46 (SPATA46).